The chain runs to 261 residues: MIETYSQPSPRSVATGPPVSMKIFMYLLTVFLITQMIGSALFAVYLHRRLDKIEDERNLHEDFVFMKTIQRCNKGEGSLSLLNCEEIRSRFEDLVKDIMQNKEVKKKEKNFEMHKGDQEPQIAAHVISEASSKTTSVLQWAPKGYYTLSNNLVTLENGKQLAVKRQGFYYIYTQVTFCSNRETLSQAPFIASLCLKSPSGSERILLRAANTHSSSKPCGQQSIHLGGVFELQSGASVFVNVTDPSQVSHGTGFTSFGLLKL.

The Cytoplasmic segment spans residues 1–22 (MIETYSQPSPRSVATGPPVSMK). A helical; Signal-anchor for type II membrane protein transmembrane segment spans residues 23 to 46 (IFMYLLTVFLITQMIGSALFAVYL). Residues 47–261 (HRRLDKIEDE…GFTSFGLLKL (215 aa)) are Extracellular-facing. One can recognise a THD domain in the interval 122-261 (IAAHVISEAS…GFTSFGLLKL (140 aa)). Cysteines 178 and 218 form a disulfide. An N-linked (GlcNAc...) asparagine glycan is attached at asparagine 240.

This sequence belongs to the tumor necrosis factor family. Homotrimer. Interacts with CD28. CD40 ligand, soluble form: Exists as either a monomer or a homotrimer. Forms a ternary complex between CD40 and integrins for CD40-CD40LG signaling. In terms of processing, the soluble form derives from the membrane form by proteolytic processing.

The protein localises to the cell membrane. It localises to the cell surface. Its subcellular location is the secreted. Its function is as follows. Cytokine that acts as a ligand to CD40/TNFRSF5. Costimulates T-cell proliferation and cytokine production. Its cross-linking on T-cells generates a costimulatory signal which enhances the production of IL4 and IL10 in conjunction with the TCR/CD3 ligation and CD28 costimulation. Induces the activation of NF-kappa-B. Induces the activation of kinases MAPK8 and PAK2 in T-cells. Mediates B-cell proliferation in the absence of co-stimulus as well as IgE production in the presence of IL4. Involved in immunoglobulin class switching. Functionally, acts as a ligand for integrins, specifically ITGA5:ITGB1 and ITGAV:ITGB3; both integrins and the CD40 receptor are required for activation of CD40-CD40LG signaling, which have cell-type dependent effects, such as B-cell activation, NF-kappa-B signaling and anti-apoptotic signaling. This chain is CD40 ligand (CD40LG), found in Bos taurus (Bovine).